A 274-amino-acid polypeptide reads, in one-letter code: Thiazole synthase (274 aa).

Lysine 115 serves as the catalytic Schiff-base intermediate with DXP. Residues glycine 176, 202–203, and 224–225 contribute to the 1-deoxy-D-xylulose 5-phosphate site; these read AG and NS.

This sequence belongs to the ThiG family. As to quaternary structure, homotetramer. Forms heterodimers with either ThiH or ThiS.

The protein resides in the cytoplasm. It catalyses the reaction [ThiS sulfur-carrier protein]-C-terminal-Gly-aminoethanethioate + 2-iminoacetate + 1-deoxy-D-xylulose 5-phosphate = [ThiS sulfur-carrier protein]-C-terminal Gly-Gly + 2-[(2R,5Z)-2-carboxy-4-methylthiazol-5(2H)-ylidene]ethyl phosphate + 2 H2O + H(+). Its pathway is cofactor biosynthesis; thiamine diphosphate biosynthesis. Functionally, catalyzes the rearrangement of 1-deoxy-D-xylulose 5-phosphate (DXP) to produce the thiazole phosphate moiety of thiamine. Sulfur is provided by the thiocarboxylate moiety of the carrier protein ThiS. In vitro, sulfur can be provided by H(2)S. This is Thiazole synthase from Parasynechococcus marenigrum (strain WH8102).